A 105-amino-acid polypeptide reads, in one-letter code: V-type ATP synthase subunit F (105 aa).

This sequence belongs to the V-ATPase F subunit family.

Functionally, produces ATP from ADP in the presence of a proton gradient across the membrane. This chain is V-type ATP synthase subunit F, found in Fusobacterium nucleatum subsp. nucleatum (strain ATCC 25586 / DSM 15643 / BCRC 10681 / CIP 101130 / JCM 8532 / KCTC 2640 / LMG 13131 / VPI 4355).